A 219-amino-acid polypeptide reads, in one-letter code: Uracil-DNA glycosylase (219 aa).

Asp-61 (proton acceptor) is an active-site residue.

Belongs to the uracil-DNA glycosylase (UDG) superfamily. UNG family.

The protein resides in the cytoplasm. The catalysed reaction is Hydrolyzes single-stranded DNA or mismatched double-stranded DNA and polynucleotides, releasing free uracil.. In terms of biological role, excises uracil residues from the DNA which can arise as a result of misincorporation of dUMP residues by DNA polymerase or due to deamination of cytosine. The polypeptide is Uracil-DNA glycosylase (Neisseria meningitidis serogroup B (strain ATCC BAA-335 / MC58)).